Consider the following 170-residue polypeptide: Acireductone dioxygenase (170 aa).

Fe(2+) is bound by residues His99, His101, Glu105, and His144. Residues His99, His101, Glu105, and His144 each contribute to the Ni(2+) site.

It belongs to the acireductone dioxygenase (ARD) family. As to quaternary structure, monomer. Fe(2+) is required as a cofactor. It depends on Ni(2+) as a cofactor.

The catalysed reaction is 1,2-dihydroxy-5-(methylsulfanyl)pent-1-en-3-one + O2 = 3-(methylsulfanyl)propanoate + CO + formate + 2 H(+). The enzyme catalyses 1,2-dihydroxy-5-(methylsulfanyl)pent-1-en-3-one + O2 = 4-methylsulfanyl-2-oxobutanoate + formate + 2 H(+). It participates in amino-acid biosynthesis; L-methionine biosynthesis via salvage pathway; L-methionine from S-methyl-5-thio-alpha-D-ribose 1-phosphate: step 5/6. Functionally, catalyzes 2 different reactions between oxygen and the acireductone 1,2-dihydroxy-3-keto-5-methylthiopentene (DHK-MTPene) depending upon the metal bound in the active site. Fe-containing acireductone dioxygenase (Fe-ARD) produces formate and 2-keto-4-methylthiobutyrate (KMTB), the alpha-ketoacid precursor of methionine in the methionine recycle pathway. Ni-containing acireductone dioxygenase (Ni-ARD) produces methylthiopropionate, carbon monoxide and formate, and does not lie on the methionine recycle pathway. This Bacillus thuringiensis (strain Al Hakam) protein is Acireductone dioxygenase.